Consider the following 1309-residue polypeptide: Disease resistance protein RPP2A (1309 aa).

In terms of domain architecture, TIR 1 spans 9-173; that stretch reads RRYDVFPSFS…MVADDVSKKL (165 aa). Glutamate 84 is an active-site residue. The NB-ARC 1 domain maps to 187–418; sequence EAHLEAMSSI…FKKTLRNYLP (232 aa). The region spanning 488–585 is the ALOG domain; that stretch reads PNRRHSNDDW…KECILVFSCH (98 aa). Residues 574–737 form the TIR 2 domain; it reads REKECILVFS…EVVRNASLRL (164 aa). One can recognise an NB-ARC 2 domain in the interval 755–987; that stretch reads SQSTDVEIMG…IFLDLACFFR (233 aa). A coiled-coil region spans residues 1114 to 1141; the sequence is LPHGLDTLPDELSLLHWENYPLVYLPQK. LRR repeat units follow at residues 1145-1167, 1168-1195, 1214-1237, 1238-1258, 1259-1283, and 1285-1307; these read VNLV…KKNL, EKLK…NLEH, CGKL…MVDL, TTLK…QDFA, PNLE…NLTE, and VTLD…EIIR.

Belongs to the disease resistance TIR-NB-LRR family.

The enzyme catalyses NAD(+) + H2O = ADP-D-ribose + nicotinamide + H(+). Functionally, disease resistance protein that cooperates with RPP2B to confer resistance to Hyaloperonospora parasitica isolate Cala2. The sequence is that of Disease resistance protein RPP2A from Arabidopsis thaliana (Mouse-ear cress).